The chain runs to 149 residues: Active regulator of SIRT1 (149 aa).

The disordered stretch occupies residues 1-64 (MSVSLLRKGL…GLRHDQKATA (64 aa)). Basic and acidic residues predominate over residues 8–19 (KGLDLLREERSG). Over residues 30 to 41 (SSKPKPCLSSSK) the composition is skewed to low complexity. Residues 43–52 (GMRKQLRRLK) are compositionally biased toward basic residues.

It belongs to the AROS family. As to quaternary structure, part of the small subunit (SSU) processome, composed of more than 70 proteins and the RNA chaperone small nucleolar RNA (snoRNA) U3.

Its subcellular location is the nucleus. The protein localises to the nucleolus. Part of the small subunit (SSU) processome, first precursor of the small eukaryotic ribosomal subunit. During the assembly of the SSU processome in the nucleolus, many ribosome biogenesis factors, an RNA chaperone and ribosomal proteins associate with the nascent pre-rRNA and work in concert to generate RNA folding, modifications, rearrangements and cleavage as well as targeted degradation of pre-ribosomal RNA by the RNA exosome. Acts as a chaperone that specifically mediates the integration of RPS19 in state post-A1. Direct regulator of SIRT1. The polypeptide is Active regulator of SIRT1 (rps19bp1) (Xenopus tropicalis (Western clawed frog)).